A 135-amino-acid polypeptide reads, in one-letter code: Lymphocyte antigen 6B (135 aa).

Positions 1–26 are cleaved as a signal peptide; it reads MNRSCAMKSCVLILLLALLCAERAQG. The 93-residue stretch at 27–119 folds into the UPAR/Ly6 domain; it reads LNCYNCTMIP…PTGGSTWTMA (93 aa). Intrachain disulfides connect cysteine 29-cysteine 54, cysteine 32-cysteine 41, cysteine 47-cysteine 75, cysteine 79-cysteine 99, and cysteine 100-cysteine 105. Residue glycine 113 is the site of GPI-anchor amidated glycine attachment. The propeptide at 114-135 is removed in mature form; the sequence is STWTMAGVLLFILGSVLLQTLL.

It is found in the cell membrane. The sequence is that of Lymphocyte antigen 6B (Ly6b) from Rattus norvegicus (Rat).